Reading from the N-terminus, the 578-residue chain is Probable cytochrome c oxidase subunit 1-alpha (578 aa).

The segment at 1–21 (MSILNEPQGASAAEDSYENEL) is disordered. Residues 44-64 (IGTMYLVTSFAFFVIGGVMAL) traverse the membrane as a helical segment. Fe(II)-heme a is bound at residue histidine 90. 6 consecutive transmembrane segments (helical) span residues 93–113 (IMLLMFATPLFAGFANWIMPL), 125–145 (LNMFAYWLYLFGSTIAVGGFL), 174–194 (LWIMGLAFSGFGTILGSVNFI), 217–237 (VLLTGVLVLLAFPVLAAALFA), 262–282 (LFWFFGHPEVYIIALPFFGIV), and 294–314 (IFGYMGLIGATIAIAGLSVTV). Cu cation contacts are provided by histidine 268 and tyrosine 272. A cross-link (1'-histidyl-3'-tyrosine (His-Tyr)) is located at residues 268 to 272 (HPEVY). The Cu cation site is built by histidine 317 and histidine 318. 2 helical membrane-spanning segments follow: residues 319 to 339 (MYVTGGVLLPFFSFMTFLIAV) and 363 to 383 (MLWSTGFLITFLFGGLTGVIL). Histidine 401 contributes to the heme a3 binding site. Transmembrane regions (helical) follow at residues 402–422 (FHYVVFGTVVFAMFAGFHFWW), 437–457 (ITFWTLFVGFHGTFLVQHWLG), and 480–500 (ISTISSFLLGMSILPFFYNIW). Histidine 403 is a Fe(II)-heme a binding site.

It belongs to the heme-copper respiratory oxidase family. In terms of assembly, associates with subunits II, III and IV to form cytochrome c oxidase. The cofactor is Cu(2+). Heme is required as a cofactor.

It localises to the cell membrane. It catalyses the reaction 4 Fe(II)-[cytochrome c] + O2 + 8 H(+)(in) = 4 Fe(III)-[cytochrome c] + 2 H2O + 4 H(+)(out). Its pathway is energy metabolism; oxidative phosphorylation. Its function is as follows. Cytochrome c oxidase is the component of the respiratory chain that catalyzes the reduction of oxygen to water. Subunits 1-3 form the functional core of the enzyme complex. CO I is the catalytic subunit of the enzyme. Electrons originating in cytochrome c are transferred via the copper A center of subunit 2 and heme A of subunit 1 to the bimetallic center formed by heme A3 and copper B. This Streptomyces coelicolor (strain ATCC BAA-471 / A3(2) / M145) protein is Probable cytochrome c oxidase subunit 1-alpha (ctaD1).